Reading from the N-terminus, the 146-residue chain is Anti-sigma F factor (146 aa).

The protein belongs to the anti-sigma-factor family.

It carries out the reaction L-seryl-[protein] + ATP = O-phospho-L-seryl-[protein] + ADP + H(+). It catalyses the reaction L-threonyl-[protein] + ATP = O-phospho-L-threonyl-[protein] + ADP + H(+). In terms of biological role, binds to sigma F and blocks its ability to form an RNA polymerase holoenzyme (E-sigma F). Phosphorylates SpoIIAA on a serine residue. This phosphorylation may enable SpoIIAA to act as an anti-anti-sigma factor that counteracts SpoIIAB and thus releases sigma F from inhibition. This chain is Anti-sigma F factor, found in Geobacillus thermodenitrificans (strain NG80-2).